A 471-amino-acid chain; its full sequence is tRNA(Ile)-lysidine synthase (471 aa).

35-40 (SGGADS) provides a ligand contact to ATP.

The protein belongs to the tRNA(Ile)-lysidine synthase family.

It is found in the cytoplasm. It carries out the reaction cytidine(34) in tRNA(Ile2) + L-lysine + ATP = lysidine(34) in tRNA(Ile2) + AMP + diphosphate + H(+). Its function is as follows. Ligates lysine onto the cytidine present at position 34 of the AUA codon-specific tRNA(Ile) that contains the anticodon CAU, in an ATP-dependent manner. Cytidine is converted to lysidine, thus changing the amino acid specificity of the tRNA from methionine to isoleucine. This is tRNA(Ile)-lysidine synthase from Geobacter sulfurreducens (strain ATCC 51573 / DSM 12127 / PCA).